Here is a 25-residue protein sequence, read N- to C-terminus: Aggression-stimulating peptide (25 aa).

As to expression, expressed by the skin glands of male frogs.

The protein localises to the secreted. Its function is as follows. Stimulates aggressive behavior in male frogs. No effect on female frogs. This Leptodactylus fallax (Mountain chicken frog) protein is Aggression-stimulating peptide.